Reading from the N-terminus, the 1347-residue chain is Protocadherin-11 X-linked (1347 aa).

Residues 1 to 23 (MDLLSGTYIFAVLLACVVFHSGA) form the signal peptide. The Extracellular portion of the chain corresponds to 24–812 (QEKNYTIREE…VSSPTSDYVK (789 aa)). Cadherin domains lie at 26–139 (KNYT…APLF), 140–249 (PATV…HPVF), 250–355 (KETE…VPSI), 362–466 (NPVN…APVF), 467–570 (TQSF…SPVF), 571–673 (THNE…KPVF), and 677–795 (PSNY…APVT). Asn-27, Asn-48, and Asn-54 each carry an N-linked (GlcNAc...) asparagine glycan. N-linked (GlcNAc...) asparagine glycosylation is present at Asn-344. N-linked (GlcNAc...) asparagine glycosylation is present at Asn-553. Residue Asn-773 is glycosylated (N-linked (GlcNAc...) asparagine). A helical transmembrane segment spans residues 813–833 (ILVAAVAGTITVVVVIFITAV). Topologically, residues 834-1347 (VRCRQAPHLK…DSPVMEEHPL (514 aa)) are cytoplasmic. 3 disordered regions span residues 1057–1091 (LPEG…GYPQ), 1097–1116 (RATP…ESTF), and 1325–1347 (TFTP…EHPL).

The protein localises to the cell membrane. Potential calcium-dependent cell-adhesion protein. The protein is Protocadherin-11 X-linked (PCDH11X) of Pan paniscus (Pygmy chimpanzee).